The following is a 457-amino-acid chain: L-lysine-epsilon aminotransferase (457 aa).

Residues Gly-131 and Ala-132 each coordinate pyridoxal 5'-phosphate. 2-oxoglutarate-binding residues include Arg-172 and Gln-278. Residue Arg-172 participates in L-lysine binding. Pyridoxal 5'-phosphate is bound at residue Gln-278. Lys-304 is modified (N6-(pyridoxal phosphate)lysine). Arg-427 lines the 2-oxoglutarate pocket.

The protein belongs to the class-III pyridoxal-phosphate-dependent aminotransferase family. Monomer. The cofactor is pyridoxal 5'-phosphate.

The catalysed reaction is L-lysine + 2-oxoglutarate = (S)-2-amino-6-oxohexanoate + L-glutamate. It functions in the pathway antibiotic biosynthesis; cephamycin C biosynthesis. Its activity is regulated as follows. Activity is induced in the presence of high concentrations of lysine, but not by L-alpha-aminoadipic acid. Not repressed by ammonium ions. Functionally, catalyzes the transfer of the terminal amino group of L-lysine to alpha-ketoglutarate to yield L-glutamate and 2-aminoadipate 6-semialdehyde ((S)-2-amino-6-oxohexanoate), which is spontaneously converted to the dehydrated form 1-piperideine 6-carboxylate. Shows a high specificity for L-lysine as substrate although L-ornithine can also be used, leading to the formation of an o-aminobenzaldehyde reactive compound. Only cis-oxaloacetate and pyruvate can replace alpha-ketoglutarate, but with very low efficiency. This is L-lysine-epsilon aminotransferase from Streptomyces clavuligerus.